The primary structure comprises 310 residues: MTELDEVDSLRSDGDSWTVTESVGATALGVAAARAVETAGANPLIRDEFAPILVSSAGPAWARLADPDIGWLDDDPHGQRLHRLGCDYQAVRTHFFDEYFAAAAGAGIEQAVILAAGLDCRAYRLNWPPEAVVFEIDQPKVLEYKAQILESHGVTAAATRHGVAVDLREDWPAALLRAGFDRDRPTAWLAEGLLPYLPGDAQDRLFEMITDLSAPRSRIAVESFTMNLTGNKQRWNRMRDRLGLDINVEALTYREPGRADAAEWLANHGWQVYSVSNREEMARLGRPVPEDLVDEAITTTLLRASLEISR.

S-adenosyl-L-methionine-binding positions include Asp137 and 166 to 167 (DL).

It belongs to the UPF0677 family.

Functionally, exhibits S-adenosyl-L-methionine-dependent methyltransferase activity. The polypeptide is Putative S-adenosyl-L-methionine-dependent methyltransferase MMAR_0356 (Mycobacterium marinum (strain ATCC BAA-535 / M)).